A 255-amino-acid chain; its full sequence is 4-hydroxy-tetrahydrodipicolinate reductase (255 aa).

Residues Gly-9–Met-14, Asp-35, Gly-89–Thr-91, and Ala-115–Phe-118 contribute to the NAD(+) site. His-145 functions as the Proton donor/acceptor in the catalytic mechanism. His-146 contributes to the (S)-2,3,4,5-tetrahydrodipicolinate binding site. The Proton donor role is filled by Lys-149. Gly-155–Thr-156 is a binding site for (S)-2,3,4,5-tetrahydrodipicolinate.

It belongs to the DapB family.

The protein resides in the cytoplasm. It carries out the reaction (S)-2,3,4,5-tetrahydrodipicolinate + NAD(+) + H2O = (2S,4S)-4-hydroxy-2,3,4,5-tetrahydrodipicolinate + NADH + H(+). The catalysed reaction is (S)-2,3,4,5-tetrahydrodipicolinate + NADP(+) + H2O = (2S,4S)-4-hydroxy-2,3,4,5-tetrahydrodipicolinate + NADPH + H(+). It functions in the pathway amino-acid biosynthesis; L-lysine biosynthesis via DAP pathway; (S)-tetrahydrodipicolinate from L-aspartate: step 4/4. Its function is as follows. Catalyzes the conversion of 4-hydroxy-tetrahydrodipicolinate (HTPA) to tetrahydrodipicolinate. The protein is 4-hydroxy-tetrahydrodipicolinate reductase of Streptococcus pneumoniae (strain 70585).